Reading from the N-terminus, the 397-residue chain is Lysophospholipid transporter LplT (397 aa).

Residues 1 to 17 (MSESVHTNTSLWSKGMK) are Periplasmic-facing. Residues 18–38 (AVIVAQFLSAFGDNALLFATL) traverse the membrane as a helical segment. Over 39–52 (ALLKAQFYPEWSQP) the chain is Cytoplasmic. The helical transmembrane segment at 53-73 (VLQMVFVGAYILFAPFVGQVA) threads the bilayer. The Periplasmic segment spans residues 74–90 (DSFAKGRVMMFANGLKL). A helical transmembrane segment spans residues 91 to 111 (LGAASICFGFNPFVGYTLVGI). At 112-144 (GAAAYSPAKYGILGELTTGDKLVKANGLMEAST) the chain is on the cytoplasmic side. The chain crosses the membrane as a helical span at residues 145-165 (IAAILLGSVAGGVLADLHVLV). Residue Ala-166 is a topological domain, periplasmic. Residues 167–187 (LAACALAYAGAVAANIYIPKL) traverse the membrane as a helical segment. The Cytoplasmic portion of the chain corresponds to 188 to 226 (AAARPGQSWNVLKMTCSFKSACTSLWQNGETRFSLVGTS). The chain crosses the membrane as a helical span at residues 227–247 (LFWGAGVTLRFLLVLWVPVAL). The Periplasmic portion of the chain corresponds to 248–256 (GITDNATPT). A helical membrane pass occupies residues 257–277 (YLNAMVAIGIVLGAGAAAKLV). Residues 278–280 (TLE) are Cytoplasmic-facing. Residues 281–301 (TVSRCMPAGILIGVVVLFFSL) form a helical membrane-spanning segment. Residues 302–304 (QHE) lie on the Periplasmic side of the membrane. A helical transmembrane segment spans residues 305–325 (LLPAYALLMLIGVLGGFFVVP). Residues 326 to 343 (LNALLQERGKKSVGAGNA) are Cytoplasmic-facing. A helical membrane pass occupies residues 344–364 (IAVQNLGENSAMLLMLGIYSL). The Periplasmic portion of the chain corresponds to 365-366 (AV). The chain crosses the membrane as a helical span at residues 367-387 (LVGIPVVPIGIGFGTLFALAI). Residues 388–397 (TALWIWQRRH) lie on the Cytoplasmic side of the membrane.

Belongs to the major facilitator superfamily. LplT (TC 2.A.1.42) family.

Its subcellular location is the cell inner membrane. Catalyzes the facilitated diffusion of 2-acyl-glycero-3-phosphoethanolamine (2-acyl-GPE) into the cell. This is Lysophospholipid transporter LplT from Escherichia fergusonii (strain ATCC 35469 / DSM 13698 / CCUG 18766 / IAM 14443 / JCM 21226 / LMG 7866 / NBRC 102419 / NCTC 12128 / CDC 0568-73).